The chain runs to 411 residues: MSLEAIVFDRSEPENVSVKVLDQLLLPYTTKYVPIHTIDDGYSVIKSMQVRGAPAIAIVGSLSVLTEVQLIKHNPTSDVATLYSLVNWESTKTVLNKRLDFLLSSRPTAVNLSNSLVEIKNILKSSSDLKAFDGSLYNYVCELIDEDLANNMKMGDNGAKYLIDVLQKDGFKDEFAVLTICNTGSLATSGYGTALGVIRSLWKDSLAKTDKADSGLDNEKCPRMGHVFPLETRPYNQGSRLTAYELVYDKIPSTLITDSSIAYRIRTSPIPIKAAFVGADRIVRNGDTANKIGTLQLAVICKQFGIKFFVVAPKTTIDNVTETGDDIIVEERNPEEFKVVTGTVINPENGSLILNESGEPITGKVGIAPLEINVWNPAFDITPHELIDGIITEEGVFTKNSSGEFQLESLF.

N-acetylserine is present on serine 2. Catalysis depends on aspartate 280, which acts as the Proton donor. A Phosphoserine modification is found at serine 351.

Belongs to the eIF-2B alpha/beta/delta subunits family. MtnA subfamily. In terms of assembly, homodimer.

The protein localises to the cytoplasm. It is found in the nucleus. It catalyses the reaction 5-(methylsulfanyl)-alpha-D-ribose 1-phosphate = 5-(methylsulfanyl)-D-ribulose 1-phosphate. Its pathway is amino-acid biosynthesis; L-methionine biosynthesis via salvage pathway; L-methionine from S-methyl-5-thio-alpha-D-ribose 1-phosphate: step 1/6. Functionally, catalyzes the interconversion of methylthioribose-1-phosphate (MTR-1-P) into methylthioribulose-1-phosphate (MTRu-1-P). The polypeptide is Methylthioribose-1-phosphate isomerase (Saccharomyces cerevisiae (strain RM11-1a) (Baker's yeast)).